A 347-amino-acid polypeptide reads, in one-letter code: High mobility group protein 20A (347 aa).

2 stretches are compositionally biased toward polar residues: residues 1-10 and 40-49; these read MENLMTSSTL and SGATSSTNNP. Disordered stretches follow at residues 1-113 and 179-211; these read MENL…YVRF and FSRKTQDRQKGKSHRQDAARQATHDHEKETEVK. The span at 55–66 shows a compositional bias: low complexity; it reads LSQGQLLQSESS. Positions 72-82 are enriched in basic and acidic residues; it reads NEQRHEDEQRS. Basic residues predominate over residues 83-96; the sequence is KRGGWSKGRKRKKP. The segment at residues 103-171 is a DNA-binding region (HMG box); it reads PKSPLTGYVR…RYMKELEQYQ (69 aa). Serine 105 carries the post-translational modification Phosphoserine. Residues 182–211 show a composition bias toward basic and acidic residues; the sequence is KTQDRQKGKSHRQDAARQATHDHEKETEVK. The stretch at 229–273 forms a coiled coil; the sequence is SKAREAELRQLRKSNMEFEERNAALQKHVESMRTAVEKLEVDVIQ.

In terms of assembly, interacts with DTNB. As to expression, ubiquitous.

The protein resides in the nucleus. Plays a role in neuronal differentiation as chromatin-associated protein. Acts as inhibitor of HMG20B. Overcomes the repressive effects of the neuronal silencer REST and induces the activation of neuronal-specific genes. Involved in the recruitment of the histone methyltransferase KMT2A/MLL1 and consequent increased methylation of histone H3 lysine 4. The protein is High mobility group protein 20A (HMG20A) of Homo sapiens (Human).